A 175-amino-acid polypeptide reads, in one-letter code: Gamma-crystallin-1 (175 aa).

Beta/gamma crystallin 'Greek key' domains are found at residues 2–40 and 41–83; these read GKIF…RVEG and GNWI…RFLP. Residues 84-88 form a connecting peptide region; the sequence is NYQGQ. Beta/gamma crystallin 'Greek key' domains follow at residues 89–129 and 130–172; these read YKMR…NVFD and GHWM…RRVY.

This sequence belongs to the beta/gamma-crystallin family. In terms of assembly, monomer.

Its function is as follows. Crystallins are the dominant structural components of the vertebrate eye lens. The chain is Gamma-crystallin-1 (cryg1) from Xenopus laevis (African clawed frog).